The primary structure comprises 145 residues: Lysozyme-like protein 4 (145 aa).

The signal sequence occupies residues 1–19 (MQLYLVLLLISYLLTPIGA). A C-type lysozyme domain is found at 20 to 145 (SILGRCTVAK…LDRWLDGCDL (126 aa)). 4 disulfide bridges follow: Cys25–Cys143, Cys49–Cys130, Cys84–Cys95, and Cys91–Cys109. Glu54 is a catalytic residue.

It belongs to the glycosyl hydrolase 22 family. In terms of assembly, monomer. Expressed strongly in testis and in epididymis, and weakly in brain and lung. Detected in sperm (at protein level).

The protein localises to the secreted. It localises to the cytoplasmic vesicle. Its subcellular location is the secretory vesicle. It is found in the acrosome. The protein resides in the cell projection. The protein localises to the cilium. It localises to the flagellum. May be involved in fertilization. Has no detectable bacteriolytic in vitro. Has no lysozyme activity in vitro. The polypeptide is Lysozyme-like protein 4 (Lyzl4) (Mus musculus (Mouse)).